We begin with the raw amino-acid sequence, 485 residues long: MRRRVCTVVRAVVCLLSTSLLTTCDFTGIFAAIQSEVPIKTPSIPGAIYGLVKAGSKLYATNGRLWEKELNGTGSWQKVSSSSVPTDSDKKVMSIATDGNTFVLACVPGTGVYKHCVNGAGSSSTGTTASPSTETCSQHATLVGGTSKPFWLVPGGTGNNGNCGCGGGGGGSSSSSSSCIHIWLVPGGTGNNGNCGCGGGGGGSSSSSSSCIHIKVENTDEQFLDMGEGYVVTTKHLYTKNGSSSAGPAQCPGGGGGGGSSGGGGSSEYTKASCSFSTPILASVSDGCYHYILTKEKVYCRKQDTASSAASSPAQCPSSPSSSSSSSTNAGCEVAHGVDDPLCLAIFKHNGCEYLLIGGSRGYGEIKLEANSSGTNGTCMRLKESNVHKSPGQWGESSPTPKASAEQYRGTVGRFAVQKIYVVEKNGGGNGVAAGGAGCPANASSSSGGTSSTQRPDLYAAVGESSDTYTGLWKFDTTTCSWNRE.

The first 23 residues, M1–T23, serve as a signal peptide directing secretion. C24 carries N-palmitoyl cysteine lipidation. C24 is lipidated: S-diacylglycerol cysteine. Low complexity predominate over residues S308–S327. Residues S308 to G331 are disordered.

The protein belongs to the TP013X lipoprotein family.

It is found in the cell membrane. This is an uncharacterized protein from Treponema pallidum (strain Nichols).